A 422-amino-acid polypeptide reads, in one-letter code: Serine hydroxymethyltransferase 2 (422 aa).

(6S)-5,6,7,8-tetrahydrofolate is bound by residues L121 and 125-127 (GHL). N6-(pyridoxal phosphate)lysine is present on K230.

It belongs to the SHMT family. As to quaternary structure, homodimer. Requires pyridoxal 5'-phosphate as cofactor.

Its subcellular location is the cytoplasm. It carries out the reaction (6R)-5,10-methylene-5,6,7,8-tetrahydrofolate + glycine + H2O = (6S)-5,6,7,8-tetrahydrofolate + L-serine. It participates in one-carbon metabolism; tetrahydrofolate interconversion. It functions in the pathway amino-acid biosynthesis; glycine biosynthesis; glycine from L-serine: step 1/1. Functionally, catalyzes the reversible interconversion of serine and glycine with tetrahydrofolate (THF) serving as the one-carbon carrier. This reaction serves as the major source of one-carbon groups required for the biosynthesis of purines, thymidylate, methionine, and other important biomolecules. Also exhibits THF-independent aldolase activity toward beta-hydroxyamino acids, producing glycine and aldehydes, via a retro-aldol mechanism. In Agrobacterium fabrum (strain C58 / ATCC 33970) (Agrobacterium tumefaciens (strain C58)), this protein is Serine hydroxymethyltransferase 2.